Here is a 457-residue protein sequence, read N- to C-terminus: Argininosuccinate lyase (457 aa).

The protein belongs to the lyase 1 family. Argininosuccinate lyase subfamily.

Its subcellular location is the cytoplasm. The catalysed reaction is 2-(N(omega)-L-arginino)succinate = fumarate + L-arginine. It participates in amino-acid biosynthesis; L-arginine biosynthesis; L-arginine from L-ornithine and carbamoyl phosphate: step 3/3. This Escherichia coli O127:H6 (strain E2348/69 / EPEC) protein is Argininosuccinate lyase.